The following is a 496-amino-acid chain: MSTEHMEELNDQQIVRREKMAALREQGIDPFGKRFERTANSQELKDKYANLDKEQLHDKNETATIAGRLVTKRGKGKVGFAHLQDREGQIQIYVRKDAVGEENYEIFKKADLGDFLGVEGEVMRTDMGELSIKATHITHLSKALRPLPEKFHGLTDVETIYRKRYLDLISNRESFERFVTRSKIISEIRRYLDQKGFLEVETPVLHNEAGGAAARPFITHHNAQNIDMVLRIATELHLKRLIVGGMERVYEIGRIFRNEGMDATHNPEFTSIEVYQAYADFQDIMDLTEGIIQHAAKSVKGDGPVNYQGTEIKINKPFKRVHMVDAIKEITGVDFWQDMTLEEAKAIAAEKKVPVEKHYTEVGHIINAFFEEFVEETLIQPTFVYGHPVAVSPLAKKNPEDQRFTDRFELFIMTKEYGNAFTELNDPIDQLSRFEAQAKAKELGDDEATGIDYDYIEALEYGMPPTGGLGIGIDRLCMLLTDTTTIRDVLLFPTMK.

Residues Glu-409 and Glu-416 each coordinate Mg(2+).

Belongs to the class-II aminoacyl-tRNA synthetase family. Homodimer. Mg(2+) serves as cofactor.

It is found in the cytoplasm. The enzyme catalyses tRNA(Lys) + L-lysine + ATP = L-lysyl-tRNA(Lys) + AMP + diphosphate. In Streptococcus pneumoniae (strain CGSP14), this protein is Lysine--tRNA ligase.